We begin with the raw amino-acid sequence, 411 residues long: MRAERLSPLLALGLLVAGIRSVHCLPENVVVKDRHRRVDGHTLASSNTDFAFSLYKQLALKNPNKNVMFSPLSVSMALAFLSLGARGPTLTEILEGLKFNLTEIQETQIHQGFQHLLQALNRPRNQLQLSVGNAMFVQEELKLLDKFIEDARVLYSSEAFPTNFRDPEAAKSLINDYVKNKTQGKIEELFKDLSPRTELVLVNYVYFKAQWKTRFDPKHTEQAEFHVSDNKTVEVPMMTLDLETPYFRDEELGCTLVELTYTSNDSALFILPDKGKMQDLEAKLTPEMLTRWRNSLQPRRIHELYLPKFSIKSNYELNDTLSQMGIKKIFTDADLSGITGTADLVVSQVVHGAALDVDEEGTEGAAATGIGIERTFLRIIVRVNRPFLIAVVLKDTQSIIFLGKVTNPSEA.

The first 24 residues, 1–24 (MRAERLSPLLALGLLVAGIRSVHC), serve as a signal peptide directing secretion. N-linked (GlcNAc...) asparagine glycans are attached at residues Asn-100, Asn-180, Asn-230, Asn-264, and Asn-318.

This sequence belongs to the serpin family. In terms of assembly, homodimer.

Its subcellular location is the cytoplasmic vesicle. The protein resides in the secretory vesicle. The protein localises to the chromaffin granule. It localises to the secreted. In terms of biological role, serine protease inhibitor. Strongly inhibits elastase and trypsin stoichiometrically at the molar ratio of 1:1. Acts as a moderate inhibitor of plasmin and chymotrypsin. Does not inhibit thrombin, urokinase, kallikrein, tissue plasminogen activator, cathepsin G or the cysteine proteases papain, cathepsin B or cathepsin L. The sequence is that of Serpin A3-3 (SERPINA3-3) from Bos taurus (Bovine).